A 484-amino-acid chain; its full sequence is GRIP domain-containing protein RUD3 (484 aa).

A compositionally biased stretch (basic residues) spans 1–15 (MGKNKKKTGKKAKSH). Residues 1–75 (MGKNKKKTGK…GVDKQKVNDG (75 aa)) are disordered. Residues 16–30 (PHVEDVDETVNKPEE) show a composition bias toward basic and acidic residues. S55 and S64 each carry phosphoserine. Residues 61 to 72 (KDLSEGVDKQKV) are compositionally biased toward basic and acidic residues. Positions 84–383 (LEDKKAGDEM…LQIGKLRHEA (300 aa)) form a coiled coil. In terms of domain architecture, GRIP spans 401–452 (SDSESVDKELISNLLISFVSIPRADPRKFEVLELLSNFLNWDEDKKQQAGLI). S468 is modified (phosphoserine).

Its subcellular location is the golgi apparatus lumen. Functionally, involved in the structural organization of the cis-Golgi and in vesicle targeting/fusion stages of ER to Golgi transport. In Saccharomyces cerevisiae (strain ATCC 204508 / S288c) (Baker's yeast), this protein is GRIP domain-containing protein RUD3 (RUD3).